The chain runs to 404 residues: ATP phosphoribosyltransferase regulatory subunit (404 aa).

This sequence belongs to the class-II aminoacyl-tRNA synthetase family. HisZ subfamily. In terms of assembly, heteromultimer composed of HisG and HisZ subunits.

Its subcellular location is the cytoplasm. It participates in amino-acid biosynthesis; L-histidine biosynthesis; L-histidine from 5-phospho-alpha-D-ribose 1-diphosphate: step 1/9. In terms of biological role, required for the first step of histidine biosynthesis. May allow the feedback regulation of ATP phosphoribosyltransferase activity by histidine. The protein is ATP phosphoribosyltransferase regulatory subunit of Trichormus variabilis (strain ATCC 29413 / PCC 7937) (Anabaena variabilis).